The following is a 261-amino-acid chain: Matrix metalloproteinase-26 (261 aa).

An N-terminal signal peptide occupies residues M1–A17. Positions V18 to D89 are excised as a propeptide. N64 is a glycosylation site (N-linked (GlcNAc...) asparagine). Positions P80–G87 match the Cysteine switch motif. Residues C82 and H208 each coordinate Zn(2+). The active site involves E209. Zn(2+) contacts are provided by H212 and H218. N221 carries N-linked (GlcNAc...) asparagine glycosylation.

The protein belongs to the peptidase M10A family. Zn(2+) serves as cofactor. Ca(2+) is required as a cofactor. As to expression, expressed specifically in uterus and placenta. Is also widely expressed in malignant tumors from different sources as well as in diverse tumor cell lines.

It localises to the secreted. It is found in the extracellular space. Its subcellular location is the extracellular matrix. Functionally, may hydrolyze collagen type IV, fibronectin, fibrinogen, beta-casein, type I gelatin and alpha-1 proteinase inhibitor. Is also able to activate progelatinase B. The polypeptide is Matrix metalloproteinase-26 (MMP26) (Homo sapiens (Human)).